Consider the following 906-residue polypeptide: Protein translocase subunit SecA (906 aa).

Residues Q86, 104 to 108, and D499 contribute to the ATP site; that span reads GEGKT. A compositionally biased stretch (basic and acidic residues) spans 834-847; that stretch reads KLQKNMRESREDPA. The segment at 834–887 is disordered; it reads KLQKNMRESREDPAFSKYNAGSSLETDLKPVVSRVDPKDRNPDDPTSWGRVSRN. Positions 890, 892, 901, and 902 each coordinate Zn(2+).

It belongs to the SecA family. In terms of assembly, monomer and homodimer. Part of the essential Sec protein translocation apparatus which comprises SecA, SecYEG and auxiliary proteins SecDF-YajC and YidC. Zn(2+) is required as a cofactor.

It localises to the cell inner membrane. The protein resides in the cytoplasm. The catalysed reaction is ATP + H2O + cellular proteinSide 1 = ADP + phosphate + cellular proteinSide 2.. Functionally, part of the Sec protein translocase complex. Interacts with the SecYEG preprotein conducting channel. Has a central role in coupling the hydrolysis of ATP to the transfer of proteins into and across the cell membrane, serving both as a receptor for the preprotein-SecB complex and as an ATP-driven molecular motor driving the stepwise translocation of polypeptide chains across the membrane. The protein is Protein translocase subunit SecA of Rickettsia felis (strain ATCC VR-1525 / URRWXCal2) (Rickettsia azadi).